We begin with the raw amino-acid sequence, 491 residues long: MDAVELLMNVTPNETRIALVETGMLREVHIERQAKRGIVGNIYKGRVTRVLPGMQSAFVDIGLEKAAFLHAADIVSHTECVDENEQKQFKVKSISELVREGQDIVVQVVKEPLGTKGARLTTDITLPSRHLVFMPENSHVGVSQRIESEEERARLKALVEPFCDELGGFIIRTATEGASEEELRQDAEFLKRLWRKVLERKSKYPTKSKIYGEPALPQRILRDFIGTNLEKIRIDSKLCFGEVKEFTDEFMPELSDKLVLYSGNQPIFDVYGVENAIQTALDKRVNLKSGGYLIIEQTEAMTTIDINTGAFVGHRNLEETIFNTNIEATKAIAHELQLRNLGGIIIIDFIDMQTDEHRNRVLQSLCDALSKDRMKTNVNGFTQLGLVEMTRKRTRESLEHVLCDECPTCHGRGRVKTVETVCYEIMREIIRVYHLFSSEQFVVYASPAVSEYLINEESHGLLPEVEMFIGKRVKVKTEQFYNQEQFDVVVM.

An S1 motif domain is found at 40–129; the sequence is GNIYKGRVTR…LTTDITLPSR (90 aa). Mg(2+) is bound by residues D305 and D348.

The protein belongs to the RNase E/G family. RNase G subfamily. Homodimer, in equilibrium with possible higher multimers. The cofactor is Mg(2+).

Its subcellular location is the cytoplasm. Functionally, an endonuclease that acts in the processing of the 5'-end of 16S rRNA and 23S rRNA. It prefers 5'-monophosphorylated substrates and cleaves single-stranded sites rich in A and U residues; contributes to tRNA processing and mRNA turnover. The chain is Ribonuclease G (rng) from Haemophilus influenzae (strain ATCC 51907 / DSM 11121 / KW20 / Rd).